The chain runs to 427 residues: 3-phosphoshikimate 1-carboxyvinyltransferase (427 aa).

3-phosphoshikimate contacts are provided by Lys-22, Ser-23, and Arg-27. Lys-22 is a binding site for phosphoenolpyruvate. The phosphoenolpyruvate site is built by Gly-96 and Arg-124. The 3-phosphoshikimate site is built by Ser-169, Ser-170, Gln-171, Ser-197, Asp-313, Asn-336, and Lys-340. Gln-171 serves as a coordination point for phosphoenolpyruvate. Asp-313 acts as the Proton acceptor in catalysis. Arg-344, Arg-386, and Lys-411 together coordinate phosphoenolpyruvate.

It belongs to the EPSP synthase family. In terms of assembly, monomer.

The protein resides in the cytoplasm. It carries out the reaction 3-phosphoshikimate + phosphoenolpyruvate = 5-O-(1-carboxyvinyl)-3-phosphoshikimate + phosphate. Its pathway is metabolic intermediate biosynthesis; chorismate biosynthesis; chorismate from D-erythrose 4-phosphate and phosphoenolpyruvate: step 6/7. Functionally, catalyzes the transfer of the enolpyruvyl moiety of phosphoenolpyruvate (PEP) to the 5-hydroxyl of shikimate-3-phosphate (S3P) to produce enolpyruvyl shikimate-3-phosphate and inorganic phosphate. This is 3-phosphoshikimate 1-carboxyvinyltransferase from Citrobacter koseri (strain ATCC BAA-895 / CDC 4225-83 / SGSC4696).